Reading from the N-terminus, the 425-residue chain is GTPase Obg (425 aa).

The 158-residue stretch at 1–158 folds into the Obg domain; the sequence is MFIDKAKIYV…REIILELKLL (158 aa). Residues 159 to 331 enclose the OBG-type G domain; the sequence is ADVGLVGFPN…LMAEVSKTLA (173 aa). GTP contacts are provided by residues 165-172, 190-194, 212-215, 282-285, and 312-314; these read GFPNVGKS, FTTLK, DIPG, NKSD, and SAA. Positions 172 and 192 each coordinate Mg(2+). Residues 345 to 425 enclose the OCT domain; that stretch reads LFIPEEKRFT…LNDFEFEFVI (81 aa).

It belongs to the TRAFAC class OBG-HflX-like GTPase superfamily. OBG GTPase family. Monomer. Mg(2+) is required as a cofactor.

The protein localises to the cytoplasm. Its function is as follows. An essential GTPase which binds GTP, GDP and possibly (p)ppGpp with moderate affinity, with high nucleotide exchange rates and a fairly low GTP hydrolysis rate. Plays a role in control of the cell cycle, stress response, ribosome biogenesis and in those bacteria that undergo differentiation, in morphogenesis control. The polypeptide is GTPase Obg (Clostridium tetani (strain Massachusetts / E88)).